The sequence spans 443 residues: MSTTPATPKVGFVSLGCPKALVDSERILTQLRMEGYEVVPTYEDADVVVVNTCGFIDSAKAESLEVIGEAIKENGKVIVTGCMGVEEGSIRDVHPSVLSVTGPQQYEQVVNAVHEVVPPRQDHNPLIDLVPPQGVKLTPRHYAYLKISEGCNHSCSFCIIPSMRGKLVSRPVGEVLSEAERLVKAGVKEILVISQDTSAYGVDVKYKTDFWNGRPVKTRMLELCEALSSLGAWVRLHYVYPYPNVDDVIPLMAAGKILPYLDIPFQHASPKVLKSMKRPAFEDRTLARIKNWREQCPELVIRSTFIVGFPGETEEDFQYLLDWLTEAQLDRVGCFQYSPVEGAPANDLGLAEVPDDVKQERWDRFMAHQQAISAARLQLRIGKEIDVLIDEVEEQGSVGRSFFDAPEIDGSVFIDGDHGFKPGDKVRCRVVDADEYDMWAEPI.

Residues 8-118 enclose the MTTase N-terminal domain; that stretch reads PKVGFVSLGC…VVNAVHEVVP (111 aa). Residues C17, C53, C82, C151, C155, and C158 each coordinate [4Fe-4S] cluster. Residues 137–375 form the Radical SAM core domain; the sequence is LTPRHYAYLK…MAHQQAISAA (239 aa). Residues 378-443 form the TRAM domain; sequence QLRIGKEIDV…DEYDMWAEPI (66 aa).

The protein belongs to the methylthiotransferase family. RimO subfamily. Requires [4Fe-4S] cluster as cofactor.

It is found in the cytoplasm. It catalyses the reaction L-aspartate(89)-[ribosomal protein uS12]-hydrogen + (sulfur carrier)-SH + AH2 + 2 S-adenosyl-L-methionine = 3-methylsulfanyl-L-aspartate(89)-[ribosomal protein uS12]-hydrogen + (sulfur carrier)-H + 5'-deoxyadenosine + L-methionine + A + S-adenosyl-L-homocysteine + 2 H(+). Catalyzes the methylthiolation of an aspartic acid residue of ribosomal protein uS12. The polypeptide is Ribosomal protein uS12 methylthiotransferase RimO (Pseudomonas putida (strain ATCC 700007 / DSM 6899 / JCM 31910 / BCRC 17059 / LMG 24140 / F1)).